Consider the following 278-residue polypeptide: TATA box-binding protein-associated factor RNA polymerase I subunit D (278 aa).

2 disordered regions span residues 20 to 71 (ANRS…SSFE) and 88 to 116 (KKRY…RNPI). A compositionally biased stretch (polar residues) spans 22–33 (RSDNSSDSSLFK). At S23 the chain carries Phosphoserine. Basic residues predominate over residues 88-99 (KKRYKKKKKRRY). S138 and S234 each carry phosphoserine.

In terms of assembly, component of the transcription factor SL1/TIF-IB complex, composed of TBP and at least TAF1A, TAF1B, TAF1C and TAF1D. Interacts with UBTF.

The protein localises to the nucleus. Component of the transcription factor SL1/TIF-IB complex, which is involved in the assembly of the PIC (preinitiation complex) during RNA polymerase I-dependent transcription. The rate of PIC formation probably is primarily dependent on the rate of association of SL1/TIF-IB with the rDNA promoter. SL1/TIF-IB is involved in stabilization of nucleolar transcription factor 1/UBTF on rDNA. Formation of SL1/TIF-IB excludes the association of TBP with TFIID subunits. This Homo sapiens (Human) protein is TATA box-binding protein-associated factor RNA polymerase I subunit D (TAF1D).